A 513-amino-acid chain; its full sequence is UDP-N-acetylmuramyl-tripeptide synthetase (513 aa).

Serine 38 lines the UDP-N-acetyl-alpha-D-muramoyl-L-alanyl-D-glutamate pocket. ATP is bound at residue 115–121; that stretch reads GTKGKTT. Residues 161-162, serine 188, and arginine 196 contribute to the UDP-N-acetyl-alpha-D-muramoyl-L-alanyl-D-glutamate site; that span reads TT. The residue at position 230 (lysine 230) is an N6-carboxylysine.

This sequence belongs to the MurCDEF family. MurE subfamily. Carboxylation is probably crucial for Mg(2+) binding and, consequently, for the gamma-phosphate positioning of ATP.

The protein localises to the cytoplasm. It functions in the pathway cell wall biogenesis; peptidoglycan biosynthesis. In terms of biological role, catalyzes the addition of an amino acid to the nucleotide precursor UDP-N-acetylmuramoyl-L-alanyl-D-glutamate (UMAG) in the biosynthesis of bacterial cell-wall peptidoglycan. The chain is UDP-N-acetylmuramyl-tripeptide synthetase from Latilactobacillus sakei subsp. sakei (strain 23K) (Lactobacillus sakei subsp. sakei).